The primary structure comprises 297 residues: MLTYQAFIQSPGDTFLNLGFLTIRWYGLLISISVVIGLFISKKLAKSRNINPQYISDILPSLIISSIIGARAYYVIFEWRQYSGSNFFTSFNLFNNVIQIPSFIAIWQGGIAIHGGLIGGFLCILYFCKSKNIHLKTFIDILIPSIILGQSIGRWGNFFNNEAFGIPTDLPWKLFVPIQNRPIEFINYQFFHPTFIYESLWNFLIFILLITIFYKQNNKNSVRPGFISCLYLIGYSFGRFWIEGLRTDPLCIGGLPPFCDGGLRMAQFISIFLFSSGLIGLFFLRLKSYKNKTRNNG.

The next 4 membrane-spanning stretches (helical) occupy residues 20–40, 58–78, 104–124, and 133–153; these read FLTI…GLFI, ILPS…VIFE, IAIW…FLCI, and IHLK…QSIG. Arg-154 provides a ligand contact to a 1,2-diacyl-sn-glycero-3-phospho-(1'-sn-glycerol). 3 consecutive transmembrane segments (helical) span residues 194–214, 225–245, and 266–286; these read TFIY…TIFY, GFIS…IEGL, and AQFI…FLRL.

It belongs to the Lgt family.

The protein localises to the cell inner membrane. It catalyses the reaction L-cysteinyl-[prolipoprotein] + a 1,2-diacyl-sn-glycero-3-phospho-(1'-sn-glycerol) = an S-1,2-diacyl-sn-glyceryl-L-cysteinyl-[prolipoprotein] + sn-glycerol 1-phosphate + H(+). It functions in the pathway protein modification; lipoprotein biosynthesis (diacylglyceryl transfer). Functionally, catalyzes the transfer of the diacylglyceryl group from phosphatidylglycerol to the sulfhydryl group of the N-terminal cysteine of a prolipoprotein, the first step in the formation of mature lipoproteins. This Prochlorococcus marinus subsp. pastoris (strain CCMP1986 / NIES-2087 / MED4) protein is Phosphatidylglycerol--prolipoprotein diacylglyceryl transferase.